The chain runs to 135 residues: Sex-regulated protein janus-A (135 aa).

Residue lysine 37 coordinates substrate. Residue histidine 63 is the Proton acceptor of the active site. Substrate is bound at residue 104 to 106 (SQG).

Belongs to the janus family.

In terms of biological role, janA and janB regulate somatic sex differentiation. The protein is Sex-regulated protein janus-A (janA) of Drosophila yakuba (Fruit fly).